A 334-amino-acid chain; its full sequence is Transcription initiation factor IIB (334 aa).

A TFIIB-type zinc finger spans residues 34–65; it reads TESVCPECKSRQLVHDYERAELVCQNCGLVID. The Zn(2+) site is built by Cys-38, Cys-41, Cys-57, and Cys-60. Tandem repeats lie at residues 151 to 234 and 245 to 326.

This sequence belongs to the TFIIB family.

Its function is as follows. Stabilizes TBP binding to an archaeal box-A promoter. Also responsible for recruiting RNA polymerase II to the pre-initiation complex (DNA-TBP-TFIIB). In Methanosphaerula palustris (strain ATCC BAA-1556 / DSM 19958 / E1-9c), this protein is Transcription initiation factor IIB.